The primary structure comprises 551 residues: MAVPVPLGRFGSFCLRLLRLLALLELLVHPVLGRVHHLALKDDVRHKVHLNTFGFFKDGYMVVNVSSLSVNEPEGATDKDAEIGFSLDRTKNDGFSSYLDEDVNYCILKKKSMSSVTLVILDISGSIVKVRSPPEAGKQLPEIVFSKDEKILSQSQEPAVSSNPKDSEARRTLDGFKAGRSTVDSKAITERSFSIHKNDGVVSFQFFFNISTDDQEGLYSLYFHKCSGNNVKPGEQASFSLNIAITEKNPNSYLSAGEIPLPKLYVSMALFFFLSGTIWIHILRKRRNDVFKIHWLMAALPFTKSLSLVFHAIDYHYISSQGFPIEGWAVVYYITHLLKGALLFITIALIGTGWAFIKHILSDKDKKIFMIVIPLQVLANVAYIIIESTEEGTTEYGLWKDSLFLVDLLCCGAILFPVVWSIRHLQEASATDGKAAINLAKLRLFRHYYVLIVCYIYFTRIIAFLLKFAVPFQWKWLYQLLDETATLVFFVLTGYKFRPASDNPYLQLSQEDDDLEMESVVTTSGVMENMKKVKKVSNGAVEPQGSWEGTA.

The first 33 residues, 1-33, serve as a signal peptide directing secretion; sequence MAVPVPLGRFGSFCLRLLRLLALLELLVHPVLG. The Extracellular portion of the chain corresponds to 40–262; that stretch reads LKDDVRHKVH…YLSAGEIPLP (223 aa). N-linked (GlcNAc...) asparagine glycosylation is found at Asn64 and Asn209. An intrachain disulfide couples Cys106 to Cys226. The chain crosses the membrane as a helical span at residues 263–283; it reads KLYVSMALFFFLSGTIWIHIL. Over 284–292 the chain is Cytoplasmic; the sequence is RKRRNDVFK. A helical transmembrane segment spans residues 293-313; that stretch reads IHWLMAALPFTKSLSLVFHAI. Topologically, residues 314–336 are extracellular; sequence DYHYISSQGFPIEGWAVVYYITH. The helical transmembrane segment at 337-357 threads the bilayer; the sequence is LLKGALLFITIALIGTGWAFI. Residues 358 to 367 are Cytoplasmic-facing; sequence KHILSDKDKK. A helical membrane pass occupies residues 368-388; sequence IFMIVIPLQVLANVAYIIIES. The Extracellular segment spans residues 389-401; it reads TEEGTTEYGLWKD. The helical transmembrane segment at 402-422 threads the bilayer; sequence SLFLVDLLCCGAILFPVVWSI. Residues 423 to 449 are Cytoplasmic-facing; it reads RHLQEASATDGKAAINLAKLRLFRHYY. A helical transmembrane segment spans residues 450–470; the sequence is VLIVCYIYFTRIIAFLLKFAV. The Extracellular segment spans residues 471–475; it reads PFQWK. A helical transmembrane segment spans residues 476 to 495; it reads WLYQLLDETATLVFFVLTGY. The Cytoplasmic segment spans residues 496 to 551; the sequence is KFRPASDNPYLQLSQEDDDLEMESVVTTSGVMENMKKVKKVSNGAVEPQGSWEGTA. Position 537 is a phosphoserine (Ser537).

It belongs to the LU7TM family. Cleaved by FURIN to yield two fragments that remain associated via a disulfide bond.

It is found in the cell membrane. It localises to the golgi apparatus. Its subcellular location is the trans-Golgi network membrane. In terms of biological role, has been proposed to act as a receptor for neuronostatin, a peptide derived from the somatostatin/SST precursor. Involved in blood sugar regulation through the induction of glucagon in response to low glucose. In Mus musculus (Mouse), this protein is Protein GPR107 (Gpr107).